Here is a 637-residue protein sequence, read N- to C-terminus: Chaperone protein HtpG (637 aa).

The tract at residues 1–345 is a; substrate-binding; that stretch reads MSQQETHGFQ…SNDLPLNVSR (345 aa). The segment at 346-562 is b; the sequence is EILQDNQVTT…EGEMSTQMIK (217 aa). Residues 563-637 are c; it reads LMQAAGQPVP…TNQMLLASVK (75 aa).

This sequence belongs to the heat shock protein 90 family. As to quaternary structure, homodimer.

Its subcellular location is the cytoplasm. Molecular chaperone. Has ATPase activity. This chain is Chaperone protein HtpG, found in Shewanella frigidimarina (strain NCIMB 400).